A 69-amino-acid polypeptide reads, in one-letter code: MISTSSILILVVLLACFMAASAQWGYGGYGRGYGGYGGYGRGYGGYGRGYGGYGRGMWGRPYGGYGWGK.

A signal peptide spans 1–22; it reads MISTSSILILVVLLACFMAASA. Tyrosine amide occurs at positions 29, 39, 46, and 53. Tryptophan amide occurs at positions 58 and 67.

Belongs to the YARP (YGGW-amide related peptide) family. As to expression, expressed in hypoderm.

It localises to the secreted. In terms of biological role, may have antimicrobial activity. May play a role in response to fungal infection. In Caenorhabditis elegans, this protein is Neuropeptide-like protein 30 (nlp-30).